The primary structure comprises 454 residues: Alpha-1,3-mannosyl-glycoprotein 4-beta-N-acetylglucosaminyltransferase C (454 aa).

Topologically, residues 1-6 (MRCHLK) are cytoplasmic. Residues 7-24 (KWVVVAAGLSILTSLYVY) form a helical; Signal-anchor for type II membrane protein membrane-spanning segment. Over 25 to 454 (MQRAQSGNLK…VWTVKEDKTI (430 aa)) the chain is Lumenal. Residues N58 and N189 are each glycosylated (N-linked (GlcNAc...) asparagine).

This sequence belongs to the glycosyltransferase 54 family. A divalent metal cation is required as a cofactor.

It is found in the golgi apparatus membrane. The catalysed reaction is N(4)-{beta-D-GlcNAc-(1-&gt;2)-alpha-D-Man-(1-&gt;3)-[beta-D-GlcNAc-(1-&gt;2)-alpha-D-Man-(1-&gt;6)]-beta-D-Man-(1-&gt;4)-beta-D-GlcNAc-(1-&gt;4)-beta-D-GlcNAc}-L-asparaginyl-[protein] + UDP-N-acetyl-alpha-D-glucosamine = N(4)-{beta-D-GlcNAc-(1-&gt;2)-[beta-D-GlcNAc-(1-&gt;4)]-alpha-D-Man-(1-&gt;3)-[beta-D-GlcNAc-(1-&gt;2)-alpha-D-Man-(1-&gt;6)]-beta-D-Man-(1-&gt;4)-beta-D-GlcNAc-(1-&gt;4)-beta-D-GlcNAc}-L-asparaginyl-[protein] + UDP + H(+). The protein operates within protein modification; protein glycosylation. Its function is as follows. Glycosyltransferase that participates in the transfer of N-acetylglucosamine (GlcNAc) to the core mannose residues of N-linked glycans. Catalyzes the formation of the GlcNAcbeta1-4 branch on the GlcNAcbeta1-2Manalpha1-3 arm of the core structure of N-linked glycans. This Danio rerio (Zebrafish) protein is Alpha-1,3-mannosyl-glycoprotein 4-beta-N-acetylglucosaminyltransferase C (mgat4c).